Consider the following 149-residue polypeptide: Large ribosomal subunit protein uL13 (149 aa).

It belongs to the universal ribosomal protein uL13 family. As to quaternary structure, part of the 50S ribosomal subunit.

Its function is as follows. This protein is one of the early assembly proteins of the 50S ribosomal subunit, although it is not seen to bind rRNA by itself. It is important during the early stages of 50S assembly. This is Large ribosomal subunit protein uL13 from Chlamydia pneumoniae (Chlamydophila pneumoniae).